Reading from the N-terminus, the 426-residue chain is Gamma-glutamyl phosphate reductase (426 aa).

Belongs to the gamma-glutamyl phosphate reductase family.

The protein localises to the cytoplasm. It catalyses the reaction L-glutamate 5-semialdehyde + phosphate + NADP(+) = L-glutamyl 5-phosphate + NADPH + H(+). It functions in the pathway amino-acid biosynthesis; L-proline biosynthesis; L-glutamate 5-semialdehyde from L-glutamate: step 2/2. Functionally, catalyzes the NADPH-dependent reduction of L-glutamate 5-phosphate into L-glutamate 5-semialdehyde and phosphate. The product spontaneously undergoes cyclization to form 1-pyrroline-5-carboxylate. The sequence is that of Gamma-glutamyl phosphate reductase from Cupriavidus pinatubonensis (strain JMP 134 / LMG 1197) (Cupriavidus necator (strain JMP 134)).